We begin with the raw amino-acid sequence, 424 residues long: UPF0597 protein Shew185_3080 (424 aa).

The protein belongs to the UPF0597 family.

The protein is UPF0597 protein Shew185_3080 of Shewanella baltica (strain OS185).